Consider the following 171-residue polypeptide: MLSQIRTLITILKHTFTRADTVEYPEQKPYLSPRYRGRIVLTRDPDGEERCVACNLCSVACPVDCISVVKTEKEDGRWEAESFTINFSRCIMCGFCEEACPTHAIQLTPDVEMAEYDRQNLVFEKEHLLISGPGKYHDYNFYKVSGKAINGKGKGEAHNEQSPINVRSLLP.

4Fe-4S ferredoxin-type domains follow at residues 41–71 (LTRDPDGEERCVACNLCSVACPVDCISVVKT) and 81–110 (ESFTINFSRCIMCGFCEEACPTHAIQLTPD). [4Fe-4S] cluster is bound by residues cysteine 51, cysteine 54, cysteine 57, cysteine 61, cysteine 90, cysteine 93, cysteine 96, and cysteine 100.

It belongs to the complex I 23 kDa subunit family. In terms of assembly, NDH-1 is composed of 13 different subunits. Subunits NuoA, H, J, K, L, M, N constitute the membrane sector of the complex. [4Fe-4S] cluster is required as a cofactor.

Its subcellular location is the cell inner membrane. It catalyses the reaction a quinone + NADH + 5 H(+)(in) = a quinol + NAD(+) + 4 H(+)(out). Functionally, NDH-1 shuttles electrons from NADH, via FMN and iron-sulfur (Fe-S) centers, to quinones in the respiratory chain. The immediate electron acceptor for the enzyme in this species is believed to be ubiquinone. Couples the redox reaction to proton translocation (for every two electrons transferred, four hydrogen ions are translocated across the cytoplasmic membrane), and thus conserves the redox energy in a proton gradient. The sequence is that of NADH-quinone oxidoreductase subunit I from Shewanella woodyi (strain ATCC 51908 / MS32).